The chain runs to 262 residues: Shikimate dehydrogenase (NADP(+)) (262 aa).

Shikimate is bound by residues 15-17 and T62; that span reads SRS. The active-site Proton acceptor is the K66. NADP(+) is bound at residue E78. Shikimate contacts are provided by N87 and D102. NADP(+)-binding positions include 126–130, 150–155, and M214; these read GAGGA and NRTLAR. Y216 contributes to the shikimate binding site. Position 236 (G236) interacts with NADP(+).

It belongs to the shikimate dehydrogenase family. As to quaternary structure, homodimer.

The enzyme catalyses shikimate + NADP(+) = 3-dehydroshikimate + NADPH + H(+). It participates in metabolic intermediate biosynthesis; chorismate biosynthesis; chorismate from D-erythrose 4-phosphate and phosphoenolpyruvate: step 4/7. Its function is as follows. Involved in the biosynthesis of the chorismate, which leads to the biosynthesis of aromatic amino acids. Catalyzes the reversible NADPH linked reduction of 3-dehydroshikimate (DHSA) to yield shikimate (SA). In Acinetobacter baumannii (strain ACICU), this protein is Shikimate dehydrogenase (NADP(+)).